Reading from the N-terminus, the 338-residue chain is Large ribosomal subunit protein uL3 (338 aa).

2 disordered regions span residues H230–Q256 and P315–P338.

The protein belongs to the universal ribosomal protein uL3 family. Part of the 50S ribosomal subunit. Forms a cluster with proteins L14 and L24e.

One of the primary rRNA binding proteins, it binds directly near the 3'-end of the 23S rRNA, where it nucleates assembly of the 50S subunit. In Pyrobaculum arsenaticum (strain DSM 13514 / JCM 11321 / PZ6), this protein is Large ribosomal subunit protein uL3.